The following is a 258-amino-acid chain: Acyl-[acyl-carrier-protein]--UDP-N-acetylglucosamine O-acyltransferase (258 aa).

Belongs to the transferase hexapeptide repeat family. LpxA subfamily. Homotrimer.

It localises to the cytoplasm. The catalysed reaction is a (3R)-hydroxyacyl-[ACP] + UDP-N-acetyl-alpha-D-glucosamine = a UDP-3-O-[(3R)-3-hydroxyacyl]-N-acetyl-alpha-D-glucosamine + holo-[ACP]. It functions in the pathway glycolipid biosynthesis; lipid IV(A) biosynthesis; lipid IV(A) from (3R)-3-hydroxytetradecanoyl-[acyl-carrier-protein] and UDP-N-acetyl-alpha-D-glucosamine: step 1/6. Involved in the biosynthesis of lipid A, a phosphorylated glycolipid that anchors the lipopolysaccharide to the outer membrane of the cell. The sequence is that of Acyl-[acyl-carrier-protein]--UDP-N-acetylglucosamine O-acyltransferase from Pseudomonas syringae pv. syringae (strain B728a).